Here is a 211-residue protein sequence, read N- to C-terminus: ATP phosphoribosyltransferase (211 aa).

This sequence belongs to the ATP phosphoribosyltransferase family. Short subfamily. As to quaternary structure, heteromultimer composed of HisG and HisZ subunits.

The protein localises to the cytoplasm. It carries out the reaction 1-(5-phospho-beta-D-ribosyl)-ATP + diphosphate = 5-phospho-alpha-D-ribose 1-diphosphate + ATP. The protein operates within amino-acid biosynthesis; L-histidine biosynthesis; L-histidine from 5-phospho-alpha-D-ribose 1-diphosphate: step 1/9. Catalyzes the condensation of ATP and 5-phosphoribose 1-diphosphate to form N'-(5'-phosphoribosyl)-ATP (PR-ATP). Has a crucial role in the pathway because the rate of histidine biosynthesis seems to be controlled primarily by regulation of HisG enzymatic activity. The polypeptide is ATP phosphoribosyltransferase (Lacticaseibacillus paracasei (strain ATCC 334 / BCRC 17002 / CCUG 31169 / CIP 107868 / KCTC 3260 / NRRL B-441) (Lactobacillus paracasei)).